A 279-amino-acid chain; its full sequence is Urease accessory protein UreD (279 aa).

This sequence belongs to the UreD family. As to quaternary structure, ureD, UreF and UreG form a complex that acts as a GTP-hydrolysis-dependent molecular chaperone, activating the urease apoprotein by helping to assemble the nickel containing metallocenter of UreC. The UreE protein probably delivers the nickel.

It is found in the cytoplasm. In terms of biological role, required for maturation of urease via the functional incorporation of the urease nickel metallocenter. This Rhodopseudomonas palustris (strain ATCC BAA-98 / CGA009) protein is Urease accessory protein UreD.